Here is a 376-residue protein sequence, read N- to C-terminus: Serpin B6 (376 aa).

An N-acetylmethionine modification is found at methionine 1. Serine 151 is modified (phosphoserine). N6-acetyllysine is present on lysine 195.

Belongs to the serpin family. Ov-serpin subfamily. Forms a complex with the monomeric form of beta-tryptase.

Its subcellular location is the cytoplasm. Its function is as follows. Inhibitor of cathepsin G, kallikrein-8 and thrombin. May play an important role in the inner ear in the protection against leakage of lysosomal content during stress. May be involved in the regulation of serine proteinases present in the brain or extravasated from the blood. The protein is Serpin B6 (SERPINB6) of Pongo abelii (Sumatran orangutan).